The following is a 1700-amino-acid chain: Rho guanine nucleotide exchange factor 28 (1700 aa).

The segment at 288-335 (TERATMPSGAAETEEEVRNLESGRSPSEEEEDGQLVKSQADGPSEQED) is disordered. Residues Ser-312, Ser-314, and Ser-478 each carry the phosphoserine modification. The tract at residues 483 to 525 (VADSEEEGRSEPPICYAVGSQSSPRTGLPGGDELDSFDANTEP) is disordered. Ser-623 carries the phosphoserine modification. Residues 651–698 (RHQFVPGTFSGVLQCSGCDKTLLGKESLQCANCKANTHKGCKDTVPPC) form a Phorbol-ester/DAG-type zinc finger. A compositionally biased stretch (polar residues) spans 709 to 720 (NKPQTILGSSSV). 2 disordered regions span residues 709–761 (NKPQ…VPGT) and 774–799 (ESEG…GSSP). Residues 728–737 (LSLHPSPSMP) show a composition bias toward low complexity. Residues 774–783 (ESEGDSNSWR) show a composition bias toward polar residues. Residues 848 to 1043 (KRQDVIFELM…KDMIAAVDLK (196 aa)) form the DH domain. The PH domain maps to 1085–1187 (ALLHDGLVYW…WMRRIQQAVE (103 aa)). A disordered region spans residues 1186–1207 (VESCPEEEGGRTSESDEERRKA). Residues 1193 to 1207 (EGGRTSESDEERRKA) show a composition bias toward basic and acidic residues. The segment at 1294 to 1303 (DVSQPSEEGP) is interaction with PTK2/FAK1; required for regulation of axonal branching and synapse formation. Residues 1369 to 1380 (IIQAIQNLTRLL) are mediates cytoplasmic retention and interaction with YWHAH. Residues 1421-1700 (QEKSRYLEKH…DGAEENIVYL (280 aa)) are interaction with microtubules. Residues 1473-1522 (ERECQSQEELLLRHRSELDHQLQEYQQNLERLREGQRMVERERQRMRDQQ) are a coiled coil. An RNA-binding region spans residues 1493-1524 (QLQEYQQNLERLREGQRMVERERQRMRDQQGL). The residue at position 1535 (Ser-1535) is a Phosphoserine. A mediates cytoplasmic retention and interaction with MAPK8IP1 region spans residues 1563-1576 (FLNDAFTHMSLNTS). Positions 1574-1598 (NTSNKPNPSGAPWDAHPPGGSHLDL) are disordered. Residue Ser-1604 is modified to Phosphoserine. The interval 1612–1700 (VSQPSDVNSE…DGAEENIVYL (89 aa)) is disordered. A compositionally biased stretch (polar residues) spans 1613–1623 (SQPSDVNSELW). Over residues 1633–1642 (ARQESIKDSC) the composition is skewed to basic and acidic residues. The span at 1647-1672 (DLNSFQTESPDPQDSNQRGPQPQTLI) shows a compositional bias: polar residues.

Homooligomer; forms cytoplasmic aggregates. Forms a complex with MAPK8 and MAPK8IP1. Interacts with RHOA. Interacts with microtubules. Interacts with YWHAE and YWHAH. Interacts with PTK2/FAK1. Interacts with NEFL. Interacts with CTNND2; prevents interaction with RHOA. Phosphorylated on tyrosine upon stimulation of cells by laminin.

The protein localises to the cytoplasm. The protein resides in the cell membrane. In terms of biological role, functions as a RHOA-specific guanine nucleotide exchange factor regulating signaling pathways downstream of integrins and growth factor receptors. Functions in axonal branching, synapse formation and dendritic morphogenesis. Also functions in focal adhesion formation, cell motility and B-lymphocytes activation. May regulate NEFL expression and aggregation and play a role in apoptosis. This is Rho guanine nucleotide exchange factor 28 (Arhgef28) from Rattus norvegicus (Rat).